Reading from the N-terminus, the 500-residue chain is MNDFPWLTIIVVFPISAGSLMLFLPHRGNKVNKWYTISICILELLLTTYAFCYNFKMDDPLIQLSEDYKWINFCDFYWRMGIDGLSIGTILLTGFITTLATLAAFPVTRDSRLFHFLMLAMYSGQIGSFSSRDLLLFFIMWELELIPVYHLLSMWGGKKRLYSATKFILYTAGSSIFLLIGVLGISLYGSNEPTLNLELLANQSYPVTLEILFYIGFLIAFAVKSPIIPLHTWLPDTHGEAHYSTCMLLAGILLKMGAYGLVRINMELLPHAHSMFSPWLMVVGTIQIIYAASTSPGQRNLKKRIAYSSVSHMGFIIIGISSITDPGLNGAILQIISHGFIGAALFFLAGTSYDRIRLVYLDEMGGMAISIPKIFTMFTILSMASLALPGMSGFVAELIVFFGIITSQKYFVISKIFIIFVMAIGMILTPIYLLSMSRQMFYGYKLINVKNFSFFDSGPRELFLSISILLPIIGIGIYPDFVLSLASDKVESILSNYFYG.

13 helical membrane passes run 4-24 (FPWLTIIVVFPISAGSLMLFL), 35-55 (YTISICILELLLTTYAFCYNF), 87-107 (IGTILLTGFITTLATLAAFPV), 134-154 (LLLFFIMWELELIPVYHLLSM), 167-187 (FILYTAGSSIFLLIGVLGISL), 211-231 (ILFYIGFLIAFAVKSPIIPLH), 242-262 (HYSTCMLLAGILLKMGAYGLV), 272-292 (AHSMFSPWLMVVGTIQIIYAA), 305-325 (IAYSSVSHMGFIIIGISSITD), 330-350 (GAILQIISHGFIGAALFFLAG), 386-406 (LALPGMSGFVAELIVFFGIIT), 416-436 (IFIIFVMAIGMILTPIYLLSM), and 462-482 (LFLSISILLPIIGIGIYPDFV).

It belongs to the complex I subunit 4 family.

Its subcellular location is the plastid. The protein resides in the chloroplast thylakoid membrane. It carries out the reaction a plastoquinone + NADH + (n+1) H(+)(in) = a plastoquinol + NAD(+) + n H(+)(out). The catalysed reaction is a plastoquinone + NADPH + (n+1) H(+)(in) = a plastoquinol + NADP(+) + n H(+)(out). The protein is NAD(P)H-quinone oxidoreductase chain 4, chloroplastic of Crucihimalaya wallichii (Rock-cress).